A 478-amino-acid polypeptide reads, in one-letter code: Puromycin-sensitive aminopeptidase-like protein (478 aa).

Substrate-binding positions include Glu-180 and 316–320 (GAMEN). Position 352 (His-352) interacts with Zn(2+). Catalysis depends on Glu-353, which acts as the Proton acceptor. The Zn(2+) site is built by His-356 and Glu-375.

This sequence belongs to the peptidase M1 family. It depends on Zn(2+) as a cofactor.

Functionally, aminopeptidase with broad substrate specificity to several peptides. In Homo sapiens (Human), this protein is Puromycin-sensitive aminopeptidase-like protein (NPEPPSL1).